Consider the following 338-residue polypeptide: Probable beta-1,4-xylosyltransferase IRX9 (338 aa).

A disordered region spans residues 1-21; it reads MASAGGCKKKTGNSRSRSPRS. Over 1-27 the chain is Cytoplasmic; that stretch reads MASAGGCKKKTGNSRSRSPRSPVVLRR. The helical; Signal-anchor for type II membrane protein transmembrane segment at 28 to 46 threads the bilayer; sequence AMLHSSLCFLVGLLAGLAA. The Lumenal portion of the chain corresponds to 47 to 338; sequence PSDWPAAAGA…IMLWRIQTTL (292 aa). 2 N-linked (GlcNAc...) asparagine glycosylation sites follow: Asn-232 and Asn-314.

The protein belongs to the glycosyltransferase 43 family.

The protein localises to the golgi apparatus membrane. Its function is as follows. Probable beta-1,4-xylosyltransferase involved in xylan biosynthesis in cell walls. This is Probable beta-1,4-xylosyltransferase IRX9 from Oryza sativa subsp. japonica (Rice).